The sequence spans 80 residues: N-V protease (80 aa).

Belongs to the peptidase S8 family. Monomer. Body cavity.

It is found in the secreted. With respect to regulation, inhibited by the serine protease inhibitors DFP, PMSF and TLCK. Not inhibited by the serine protease inhibitors aprotinin, elastinal, SBTI and benzamidine, the cysteine protease inhibitors iodoacetate and E64, or the metalloprotease inhibitors EDTA and EGTA. In terms of biological role, serine protease. Hydrolyzes the alpha chains of fibrin and fibrinogen completely, has lower activity on the beta and gamma chains of fibrin and fibrinogen. This chain is N-V protease, found in Alitta virens (Sandworm).